The sequence spans 191 residues: Cell division protein SepF (191 aa).

The disordered stretch occupies residues 21–96; it reads EVEEPAVASV…NQQPAQEKTT (76 aa). The segment covering 25–56 has biased composition (low complexity); sequence PAVASVKRQQDAAQPASQQQKAQSHQYHQSAS. 2 stretches are compositionally biased toward polar residues: residues 57-69 and 86-95; these read RPSQ…GQNR and HNQQPAQEKT.

It belongs to the SepF family. As to quaternary structure, homodimer. Interacts with FtsZ.

The protein resides in the cytoplasm. In terms of biological role, cell division protein that is part of the divisome complex and is recruited early to the Z-ring. Probably stimulates Z-ring formation, perhaps through the cross-linking of FtsZ protofilaments. Its function overlaps with FtsA. The protein is Cell division protein SepF of Streptococcus mutans serotype c (strain ATCC 700610 / UA159).